A 101-amino-acid chain; its full sequence is Small ribosomal subunit protein bS18c (101 aa).

It belongs to the bacterial ribosomal protein bS18 family. Part of the 30S ribosomal subunit.

Its subcellular location is the plastid. The protein resides in the chloroplast. This chain is Small ribosomal subunit protein bS18c, found in Oenothera biennis (German evening primrose).